Reading from the N-terminus, the 233-residue chain is Large ribosomal subunit protein uL22m (233 aa).

Belongs to the universal ribosomal protein uL22 family. Component of the mitochondrial ribosome large subunit (39S) which comprises a 16S rRNA and about 50 distinct proteins.

It localises to the mitochondrion. This Drosophila melanogaster (Fruit fly) protein is Large ribosomal subunit protein uL22m (mRpL22).